Reading from the N-terminus, the 626-residue chain is ATP-dependent RNA helicase cyt-19, mitochondrial (626 aa).

The short motif at 74–103 (ADLAALGVHENVVRAITHGMGYENMTEVQS) is the Q motif element. Residues 106–297 (ISPALKGKDI…RSYIDKNNFE (192 aa)) form the Helicase ATP-binding domain. 119–126 (AKTGTGKT) serves as a coordination point for ATP. Residues 241–244 (DEAD) carry the DEAD box motif. Positions 329–493 (AMLELIEKAL…CASVNAADSG (165 aa)) constitute a Helicase C-terminal domain. Residues 569–626 (LRVETREHSMRPMGSGPGHRRDFNSRGPRRQSDDPFENALHRAQDLDRRPTRRQQASF) are disordered. The tract at residues 578–626 (MRPMGSGPGHRRDFNSRGPRRQSDDPFENALHRAQDLDRRPTRRQQASF) is RNA-binding. Basic and acidic residues predominate over residues 607–617 (ALHRAQDLDRR).

This sequence belongs to the DEAD box helicase family.

It is found in the mitochondrion matrix. It catalyses the reaction ATP + H2O = ADP + phosphate + H(+). Its activity is regulated as follows. Activated by exposed helices in a group I intron RNA. In terms of biological role, acts as an RNA chaperone to resolve non-native structures formed during RNA folding to promote mitochondrial group I, but also group II, intron splicing. Functions predominantly by disrupting accessible RNA secondary structure and depends on spontaneous openings in tightly packed RNAs to gain access to RNA helices. The sequence is that of ATP-dependent RNA helicase cyt-19, mitochondrial from Neurospora crassa (strain ATCC 24698 / 74-OR23-1A / CBS 708.71 / DSM 1257 / FGSC 987).